The chain runs to 120 residues: NAD(P)H-quinone oxidoreductase subunit 3 (120 aa).

Transmembrane regions (helical) follow at residues 6–26 (GYDAFLGFLLIAAAVPALALI), 64–84 (MFALVFVIFDVETVFLYPWAV), and 89–109 (LGVLAFIEALIFITILLVALA).

This sequence belongs to the complex I subunit 3 family. NDH-1 can be composed of about 15 different subunits; different subcomplexes with different compositions have been identified which probably have different functions.

Its subcellular location is the cellular thylakoid membrane. It carries out the reaction a plastoquinone + NADH + (n+1) H(+)(in) = a plastoquinol + NAD(+) + n H(+)(out). The enzyme catalyses a plastoquinone + NADPH + (n+1) H(+)(in) = a plastoquinol + NADP(+) + n H(+)(out). Its function is as follows. NDH-1 shuttles electrons from an unknown electron donor, via FMN and iron-sulfur (Fe-S) centers, to quinones in the respiratory and/or the photosynthetic chain. The immediate electron acceptor for the enzyme in this species is believed to be plastoquinone. Couples the redox reaction to proton translocation, and thus conserves the redox energy in a proton gradient. Cyanobacterial NDH-1 also plays a role in inorganic carbon-concentration. The chain is NAD(P)H-quinone oxidoreductase subunit 3 from Parasynechococcus marenigrum (strain WH8102).